The primary structure comprises 496 residues: Galactan beta-1,4-galactosyltransferase GALS1 (496 aa).

A helical membrane pass occupies residues 22 to 42; that stretch reads IIATLLALSLVMIVWNLPPYY. The 233-residue stretch at 232–464 folds into the GT92 domain; sequence DYLYCGSSLY…AKKKVTLYNK (233 aa).

This sequence belongs to the glycosyltransferase 92 family. Expressed in root vasculature, mature leaves, trichomes, flowers, siliques and seeds.

It is found in the golgi apparatus membrane. Its function is as follows. Involved in the biosynthesis of beta-1,4-galactan. Can transfer galactose residues from UDP-galactose to beta-1,4-galactopentaose in vitro. Forms specifically beta-1,4-galactosyl linkages and can add successive beta-1,4-galactosyl residues to the acceptor. Beta-1,4-galactans are abundant polysaccharides in plant cell walls and are found as side-chain of rhamnogalacturonan I, which is a major component of pectin. This is Galactan beta-1,4-galactosyltransferase GALS1 from Arabidopsis thaliana (Mouse-ear cress).